The sequence spans 292 residues: Lipoyl synthase (292 aa).

The [4Fe-4S] cluster site is built by Cys38, Cys43, Cys49, Cys64, Cys68, Cys71, and Ser277. Residues 50–266 (WSKGTATFML…KNRAESLGFR (217 aa)) enclose the Radical SAM core domain.

This sequence belongs to the radical SAM superfamily. Lipoyl synthase family. [4Fe-4S] cluster is required as a cofactor.

The protein resides in the cytoplasm. It catalyses the reaction [[Fe-S] cluster scaffold protein carrying a second [4Fe-4S](2+) cluster] + N(6)-octanoyl-L-lysyl-[protein] + 2 oxidized [2Fe-2S]-[ferredoxin] + 2 S-adenosyl-L-methionine + 4 H(+) = [[Fe-S] cluster scaffold protein] + N(6)-[(R)-dihydrolipoyl]-L-lysyl-[protein] + 4 Fe(3+) + 2 hydrogen sulfide + 2 5'-deoxyadenosine + 2 L-methionine + 2 reduced [2Fe-2S]-[ferredoxin]. It functions in the pathway protein modification; protein lipoylation via endogenous pathway; protein N(6)-(lipoyl)lysine from octanoyl-[acyl-carrier-protein]: step 2/2. In terms of biological role, catalyzes the radical-mediated insertion of two sulfur atoms into the C-6 and C-8 positions of the octanoyl moiety bound to the lipoyl domains of lipoate-dependent enzymes, thereby converting the octanoylated domains into lipoylated derivatives. This Chlorobium limicola (strain DSM 245 / NBRC 103803 / 6330) protein is Lipoyl synthase.